The following is a 299-amino-acid chain: MESIIEKAEILLEALPFIRNFRGKTFVIKYGGNAMDKADLRDAFAQDIIMLKYIGINPVIVHGGGPQIGQYLKKMGLESKFVGGLRVTDKETMDIVEMVLGGLVNKSIVQLINSYSGGHVKAVGITGKDGCLIKAKKLDAEEYFRSIGDYRPTELLDLGHVGEVEEVNPELLIHLDEDNYIPVIAPIGFDAEGNAYNINADFVAAAIAGALKAEKVLFLTDIEGLKDENGNTLSSATVSQINQMIKDGVIKGGMIPKVKACIQALEKGVNKAHILDGRLPHCILLEIFTKKGVGTEITL.

Substrate is bound by residues 64–65, Arg-86, and Asn-197; that span reads GG.

The protein belongs to the acetylglutamate kinase family. ArgB subfamily.

The protein localises to the cytoplasm. It carries out the reaction N-acetyl-L-glutamate + ATP = N-acetyl-L-glutamyl 5-phosphate + ADP. It participates in amino-acid biosynthesis; L-arginine biosynthesis; N(2)-acetyl-L-ornithine from L-glutamate: step 2/4. Catalyzes the ATP-dependent phosphorylation of N-acetyl-L-glutamate. This Sulfurihydrogenibium sp. (strain YO3AOP1) protein is Acetylglutamate kinase.